A 284-amino-acid polypeptide reads, in one-letter code: Diaminopimelate epimerase (284 aa).

Asn20, Gln53, and Asn73 together coordinate substrate. Cys82 acts as the Proton donor in catalysis. Substrate contacts are provided by residues 83-84, Asn167, Asn200, and 218-219; these read GN and ER. Cys227 functions as the Proton acceptor in the catalytic mechanism. Substrate is bound at residue 228–229; that stretch reads GS.

This sequence belongs to the diaminopimelate epimerase family. As to quaternary structure, homodimer.

Its subcellular location is the cytoplasm. The catalysed reaction is (2S,6S)-2,6-diaminopimelate = meso-2,6-diaminopimelate. Its pathway is amino-acid biosynthesis; L-lysine biosynthesis via DAP pathway; DL-2,6-diaminopimelate from LL-2,6-diaminopimelate: step 1/1. Functionally, catalyzes the stereoinversion of LL-2,6-diaminopimelate (L,L-DAP) to meso-diaminopimelate (meso-DAP), a precursor of L-lysine and an essential component of the bacterial peptidoglycan. This is Diaminopimelate epimerase from Xanthomonas axonopodis pv. citri (strain 306).